A 399-amino-acid chain; its full sequence is Alpha-ketoglutarate-dependent dioxygenase fc-dox (399 aa).

Fe cation contacts are provided by His-158 and Asp-160. Thr-203 is a binding site for 2-oxoglutarate. His-355 is a binding site for Fe cation. Arg-367 is a binding site for 2-oxoglutarate. The disordered stretch occupies residues 371–399 (QGWLAGDRPPKGPVPIPDPRARSSIYYQK).

Belongs to the TfdA dioxygenase family. It depends on Fe(2+) as a cofactor.

The protein operates within mycotoxin biosynthesis. Alpha-ketoglutarate-dependent dioxygenase; part of the 2 gene clusters that mediate the biosynthesis of fusicoccins, diterpene glucosides that display phytohormone-like activity and function as potent activators of plasma membrane H(+)-ATPases in plants by modifying 14-3-3 proteins and cause the plant disease constriction canker. The first step in the pathway is performed by the fusicoccadiene synthase PaFS that possesses both prenyl transferase and terpene cyclase activity, converting isopentenyl diphosphate and dimethylallyl diphosphate into geranylgeranyl diphosphate (GGDP) and successively converting GGDP into fusicocca-2,10(14)-diene, a precursor for fusicoccin H. The second step is the oxidation at the C-8 position by the cytochrome P450 monooxygenase PaP450-2 to yield fusicocca-2,10(14)-diene-8-beta-ol. The cytochrome P450 monooxygenase PaP450-1 then catalyzes the hydroxylation at the C-16 position to produce fusicocca-2,10(14)-diene-8-beta,16-diol. The dioxygenase fc-dox then catalyzes the 16-oxydation of fusicocca-2,10(14)-diene-8-beta,16-diol to yield an aldehyde (8-beta-hydroxyfusicocca-1,10(14)-dien-16-al). The short-chain dehydrogenase/reductase fc-sdr catalyzes the reduction of the aldehyde to yield fusicocca-1,10(14)-diene-8-beta,16-diol. The next step is the hydroxylation at C-9 performed by the cytochrome P450 monooxygenase PaP450-3 that leads to fusicoccin H aglycon which is glycosylated to fusicoccin H by the O-glycosyltransferase PaGT. Hydroxylation at C-12 by the cytochrome P450 monooxygenase PaP450-4 leads then to the production of fusicoccin Q and is followed by methylation by the O-methyltransferase PaMT to yield fusicoccin P. Fusicoccin P is further converted to fusicoccin J via prenylation by the O-glucose prenyltransferase PaPT. Cytochrome P450 monooxygenase PaP450-5 then performs hydroxylation at C-19 to yield dideacetyl-fusicoccin A which is acetylated to 3'-O-deacetyl-fusicoccin A by the O-acetyltransferase PaAT-2. Finally, a another acetylation by the O-acetyltransferase PaAT-1 yields fusicoccin A. This chain is Alpha-ketoglutarate-dependent dioxygenase fc-dox, found in Phomopsis amygdali (Fusicoccum amygdali).